The chain runs to 269 residues: Regulatory protein RecX (269 aa).

It belongs to the RecX family.

It is found in the cytoplasm. Modulates RecA activity. In Listeria monocytogenes serotype 4a (strain HCC23), this protein is Regulatory protein RecX.